Consider the following 89-residue polypeptide: Small ribosomal subunit protein uS15 (89 aa).

It belongs to the universal ribosomal protein uS15 family. In terms of assembly, part of the 30S ribosomal subunit. Forms a bridge to the 50S subunit in the 70S ribosome, contacting the 23S rRNA.

In terms of biological role, one of the primary rRNA binding proteins, it binds directly to 16S rRNA where it helps nucleate assembly of the platform of the 30S subunit by binding and bridging several RNA helices of the 16S rRNA. Functionally, forms an intersubunit bridge (bridge B4) with the 23S rRNA of the 50S subunit in the ribosome. The sequence is that of Small ribosomal subunit protein uS15 from Saccharopolyspora erythraea (strain ATCC 11635 / DSM 40517 / JCM 4748 / NBRC 13426 / NCIMB 8594 / NRRL 2338).